The following is a 205-amino-acid chain: Ribosomal RNA small subunit methyltransferase G (205 aa).

Residues glycine 73, leucine 78, valine 124–glutamate 125, and arginine 138 each bind S-adenosyl-L-methionine.

The protein belongs to the methyltransferase superfamily. RNA methyltransferase RsmG family.

It is found in the cytoplasm. The enzyme catalyses guanosine(527) in 16S rRNA + S-adenosyl-L-methionine = N(7)-methylguanosine(527) in 16S rRNA + S-adenosyl-L-homocysteine. Its function is as follows. Specifically methylates the N7 position of guanine in position 527 of 16S rRNA. The polypeptide is Ribosomal RNA small subunit methyltransferase G (Actinobacillus pleuropneumoniae serotype 5b (strain L20)).